The primary structure comprises 147 residues: Protein MC014 (147 aa).

Its subcellular location is the host nucleus. The chain is Protein MC014 (MC014) from Homo sapiens (Human).